We begin with the raw amino-acid sequence, 886 residues long: Alanine--tRNA ligase (886 aa).

The Zn(2+) site is built by H568, H572, C670, and H674.

This sequence belongs to the class-II aminoacyl-tRNA synthetase family. The cofactor is Zn(2+).

It localises to the cytoplasm. The catalysed reaction is tRNA(Ala) + L-alanine + ATP = L-alanyl-tRNA(Ala) + AMP + diphosphate. Functionally, catalyzes the attachment of alanine to tRNA(Ala) in a two-step reaction: alanine is first activated by ATP to form Ala-AMP and then transferred to the acceptor end of tRNA(Ala). Also edits incorrectly charged Ser-tRNA(Ala) and Gly-tRNA(Ala) via its editing domain. The protein is Alanine--tRNA ligase of Prochlorococcus marinus (strain NATL2A).